Consider the following 299-residue polypeptide: GTPase Era (299 aa).

An Era-type G domain is found at 8-176; it reads RCGYVAIVGR…EKLVGERLPE (169 aa). The tract at residues 16 to 23 is G1; that stretch reads GRPNVGKS. 16 to 23 lines the GTP pocket; sequence GRPNVGKS. The G2 stretch occupies residues 42–46; it reads QTTRH. The tract at residues 63–66 is G3; sequence DTPG. Residues 63 to 67 and 125 to 128 contribute to the GTP site; these read DTPGL and NKAD. A G4 region spans residues 125-128; it reads NKAD. The tract at residues 155 to 157 is G5; the sequence is ISA. The 85-residue stretch at 199–283 folds into the KH type-2 domain; it reads IREKIMRQLG…MLNLWVKVKG (85 aa).

This sequence belongs to the TRAFAC class TrmE-Era-EngA-EngB-Septin-like GTPase superfamily. Era GTPase family. In terms of assembly, monomer.

The protein resides in the cytoplasm. The protein localises to the cell inner membrane. Functionally, an essential GTPase that binds both GDP and GTP, with rapid nucleotide exchange. Plays a role in 16S rRNA processing and 30S ribosomal subunit biogenesis and possibly also in cell cycle regulation and energy metabolism. This chain is GTPase Era, found in Ectopseudomonas mendocina (strain ymp) (Pseudomonas mendocina).